The chain runs to 394 residues: Elongation factor Tu (394 aa).

The tr-type G domain occupies 10–204 (KPHVNIGTIG…AVDSYIPQPV (195 aa)). The tract at residues 19 to 26 (GHVDHGKT) is G1. 19-26 (GHVDHGKT) lines the GTP pocket. Thr-26 is a Mg(2+) binding site. The interval 60–64 (GITIS) is G2. The interval 81–84 (DCPG) is G3. GTP-binding positions include 81–85 (DCPGH) and 136–139 (NKID). The segment at 136-139 (NKID) is G4. Positions 174–176 (SAL) are G5.

This sequence belongs to the TRAFAC class translation factor GTPase superfamily. Classic translation factor GTPase family. EF-Tu/EF-1A subfamily. In terms of assembly, monomer.

The protein localises to the cytoplasm. It carries out the reaction GTP + H2O = GDP + phosphate + H(+). Its function is as follows. GTP hydrolase that promotes the GTP-dependent binding of aminoacyl-tRNA to the A-site of ribosomes during protein biosynthesis. The protein is Elongation factor Tu of Rickettsia rickettsii.